We begin with the raw amino-acid sequence, 323 residues long: tRNA U34 carboxymethyltransferase (323 aa).

Residues K91, W105, K110, G130, 152 to 154 (DPT), 181 to 182 (IE), M196, Y200, and R315 contribute to the carboxy-S-adenosyl-L-methionine site.

It belongs to the class I-like SAM-binding methyltransferase superfamily. CmoB family. As to quaternary structure, homotetramer.

It carries out the reaction carboxy-S-adenosyl-L-methionine + 5-hydroxyuridine(34) in tRNA = 5-carboxymethoxyuridine(34) in tRNA + S-adenosyl-L-homocysteine + H(+). Its function is as follows. Catalyzes carboxymethyl transfer from carboxy-S-adenosyl-L-methionine (Cx-SAM) to 5-hydroxyuridine (ho5U) to form 5-carboxymethoxyuridine (cmo5U) at position 34 in tRNAs. This is tRNA U34 carboxymethyltransferase from Salmonella typhimurium (strain LT2 / SGSC1412 / ATCC 700720).